We begin with the raw amino-acid sequence, 385 residues long: Putative UDP-N-acetylglucosamine 2-epimerase (385 aa).

The protein belongs to the UDP-N-acetylglucosamine 2-epimerase family.

It is found in the cytoplasm. The enzyme catalyses UDP-N-acetyl-alpha-D-glucosamine = UDP-N-acetyl-alpha-D-mannosamine. This Clostridium acetobutylicum (strain ATCC 824 / DSM 792 / JCM 1419 / IAM 19013 / LMG 5710 / NBRC 13948 / NRRL B-527 / VKM B-1787 / 2291 / W) protein is Putative UDP-N-acetylglucosamine 2-epimerase.